Consider the following 181-residue polypeptide: Protein CENTRORADIALIS (181 aa).

The protein belongs to the phosphatidylethanolamine-binding protein family. As to quaternary structure, may form homodimers in solution.

It localises to the cytoplasm. In terms of biological role, expression of CEN leads to a morphological switch between shoot growth and the development of flower structures (inflorescence). May form complexes with phosphorylated ligands by interfering with kinases and their effectors. This Antirrhinum majus (Garden snapdragon) protein is Protein CENTRORADIALIS (CEN).